The primary structure comprises 411 residues: Citrate synthase (411 aa).

Active-site residues include H304 and D363.

It belongs to the citrate synthase family.

It carries out the reaction oxaloacetate + acetyl-CoA + H2O = citrate + CoA + H(+). The protein operates within carbohydrate metabolism; tricarboxylic acid cycle; isocitrate from oxaloacetate: step 1/2. The protein is Citrate synthase (gltA) of Rickettsia conorii subsp. caspia (strain A-167) (Astrakhan rickettsia).